Reading from the N-terminus, the 390-residue chain is GTPase Obg (390 aa).

The region spanning 1-159 (MKFVDEASIL…RELLLELMLL (159 aa)) is the Obg domain. The disordered stretch occupies residues 127-147 (NTRFKSSVNRTPRQKTNGTPG). Residues 129 to 145 (RFKSSVNRTPRQKTNGT) are compositionally biased toward polar residues. One can recognise an OBG-type G domain in the interval 160–333 (ADVGMLGMPN…LCWDVMTFII (174 aa)). GTP contacts are provided by residues 166–173 (GMPNAGKS), 191–195 (FTTLV), 213–216 (DIPG), 283–286 (NKID), and 314–316 (SAA). The Mg(2+) site is built by S173 and T193.

The protein belongs to the TRAFAC class OBG-HflX-like GTPase superfamily. OBG GTPase family. Monomer. It depends on Mg(2+) as a cofactor.

The protein localises to the cytoplasm. An essential GTPase which binds GTP, GDP and possibly (p)ppGpp with moderate affinity, with high nucleotide exchange rates and a fairly low GTP hydrolysis rate. Plays a role in control of the cell cycle, stress response, ribosome biogenesis and in those bacteria that undergo differentiation, in morphogenesis control. The sequence is that of GTPase Obg from Escherichia coli (strain K12 / DH10B).